The sequence spans 394 residues: Elongation factor Tu (394 aa).

One can recognise a tr-type G domain in the interval 10–204 (KEHANIGTIG…AVDTYIPTPE (195 aa)). Residues 19–26 (GHVDHGKT) form a G1 region. 19 to 26 (GHVDHGKT) is a binding site for GTP. Thr-26 provides a ligand contact to Mg(2+). Residues 60–64 (GITIN) are G2. Residues 81-84 (DCPG) are G3. GTP contacts are provided by residues 81-85 (DCPGH) and 136-139 (NKVD). A G4 region spans residues 136-139 (NKVD). The tract at residues 174-176 (SAL) is G5.

It belongs to the TRAFAC class translation factor GTPase superfamily. Classic translation factor GTPase family. EF-Tu/EF-1A subfamily. As to quaternary structure, monomer.

The protein localises to the cytoplasm. It catalyses the reaction GTP + H2O = GDP + phosphate + H(+). In terms of biological role, GTP hydrolase that promotes the GTP-dependent binding of aminoacyl-tRNA to the A-site of ribosomes during protein biosynthesis. The polypeptide is Elongation factor Tu (Staphylococcus aureus (strain COL)).